Consider the following 433-residue polypeptide: UPF0761 membrane protein Sde_0901 (433 aa).

Helical transmembrane passes span 46–66 (LFAMVPLMAVFYSMFSMFPAF), 103–123 (LSAAGAGLLVVTAYLMLTNIE), 142–162 (FLLYWAVLTIGPLLLGAGLAM), 185–205 (FFSYLPLFTTSAAFTLLFAAV), 217–237 (IGGILTAVCFELLKIGFGWVV), and 247–267 (GAFAVVPLFLLWVNLLWMIIL).

This sequence belongs to the UPF0761 family.

The protein resides in the cell inner membrane. The protein is UPF0761 membrane protein Sde_0901 of Saccharophagus degradans (strain 2-40 / ATCC 43961 / DSM 17024).